Here is a 119-residue protein sequence, read N- to C-terminus: Large ribosomal subunit protein bL20 (119 aa).

Belongs to the bacterial ribosomal protein bL20 family.

Binds directly to 23S ribosomal RNA and is necessary for the in vitro assembly process of the 50S ribosomal subunit. It is not involved in the protein synthesizing functions of that subunit. The chain is Large ribosomal subunit protein bL20 from Acinetobacter baumannii (strain SDF).